Here is a 782-residue protein sequence, read N- to C-terminus: Protein PAT1 homolog 1 (782 aa).

Disordered stretches follow at residues glycine 96–proline 153, leucine 177–proline 217, valine 332–methionine 372, and glutamate 460–leucine 481. Residues serine 108–serine 117 are compositionally biased toward low complexity. Residues glycine 208 to proline 217 are compositionally biased toward polar residues. Basic residues predominate over residues histidine 335–arginine 347. A compositionally biased stretch (polar residues) spans glycine 348 to glutamine 366. The segment covering serine 471–leucine 481 has biased composition (basic and acidic residues).

Interacts with AFPH2/NINJA. Expressed in root vasculature, shoot apical meristem (SAM) and leaves.

Functionally, activator of mRNA decapping. Involved in mRNA decay via decapping. Involved in the regulation of root stem cell niche identity. Maintains root stem cell niche stability through the interaction with the negative regulator of jasmonate signaling AFPH2/NINJA, and the regulation of cell division. The polypeptide is Protein PAT1 homolog 1 (Arabidopsis thaliana (Mouse-ear cress)).